A 341-amino-acid chain; its full sequence is Acetylpolyamine amidohydrolase (341 aa).

Substrate is bound by residues Y19, E106, and E117. Catalysis depends on H159, which acts as the Proton donor/acceptor. Zn(2+) contacts are provided by D195, H197, and D284. Y323 contributes to the substrate binding site.

This sequence belongs to the histone deacetylase family. As to quaternary structure, homodimer. Requires Zn(2+) as cofactor.

It catalyses the reaction N-acetylputrescine + H2O = putrescine + acetate. The catalysed reaction is N-acetylcadaverine + H2O = cadaverine + acetate. The enzyme catalyses N(1)-acetylspermine + H2O = spermine + acetate. It carries out the reaction N(1)-acetylspermidine + H2O = spermidine + acetate. It catalyses the reaction N(8)-acetylspermidine + H2O = spermidine + acetate. The protein operates within amine and polyamine metabolism. Zinc ions inhibit enzyme activity in a dose-dependent manner. Inhibited by KCl at concentrations above 10 mM. Inhibited by o-oxyquinoline in vitro, suggesting that it is a metalloprotein. Inhibited by various substrate N(8)-acetylspermidine analogs bearing different metal-binding groups such as trifluoromethylketone, thiol, or hydroxamate, and by hydroxamate analogs of short-chain acetyldiamines. Its function is as follows. Involved in polyamine metabolism. Catalyzes the deacetylation of various acetylated polyamines such as N-acetylputrescine, N-acetylcadaverine, N(1)-acetylspermine, N(1)-acetylspermidine and N(8)-acetylspermidine. In vitro, is also able to deacetylate L-Lys(epsilon-acetyl)coumarin, but has very low activity towards the larger tetrapeptide N-acetyl-L-Arg-L-His-L-Lys(epsilon-acetyl)-L-Lys(epsilon-acetyl)coumarin. The polypeptide is Acetylpolyamine amidohydrolase (Mycoplana ramosa (Mycoplana bullata)).